Reading from the N-terminus, the 430-residue chain is GTPase Obg (430 aa).

One can recognise an Obg domain in the interval 1 to 158; the sequence is MFVDQVKISL…LDVSLELKLL (158 aa). The segment at 118–145 is disordered; it reads KGGRGGRGNSRFATPRNPAPDFSEKGEP. Residues 159–329 enclose the OBG-type G domain; sequence ADVGLVGFPS…LLYAIADKLE (171 aa). GTP contacts are provided by residues 165–172, 190–194, 212–215, 282–285, and 310–312; these read GFPSVGKS, FTTIK, DLPG, NKMD, and STI. Mg(2+) is bound by residues serine 172 and threonine 192. In terms of domain architecture, OCT spans 352–430; that stretch reads KHTPSQDKFT…ILGGEFEFVE (79 aa).

It belongs to the TRAFAC class OBG-HflX-like GTPase superfamily. OBG GTPase family. As to quaternary structure, monomer. Requires Mg(2+) as cofactor.

The protein localises to the cytoplasm. Functionally, an essential GTPase which binds GTP, GDP and possibly (p)ppGpp with moderate affinity, with high nucleotide exchange rates and a fairly low GTP hydrolysis rate. Plays a role in control of the cell cycle, stress response, ribosome biogenesis and in those bacteria that undergo differentiation, in morphogenesis control. This is GTPase Obg from Staphylococcus aureus (strain Mu3 / ATCC 700698).